Reading from the N-terminus, the 105-residue chain is uncharacterized protein (105 aa).

2 consecutive transmembrane segments (helical) span residues 26-46 and 66-86; these read NVLI…CIAI and SALA…TLAI.

Its subcellular location is the cell membrane. This is an uncharacterized protein from Mycoplasma pneumoniae (strain ATCC 29342 / M129 / Subtype 1) (Mycoplasmoides pneumoniae).